We begin with the raw amino-acid sequence, 283 residues long: 4-diphosphocytidyl-2-C-methyl-D-erythritol kinase (283 aa).

Lysine 10 is an active-site residue. 95-105 (PVAAGLGGGSS) provides a ligand contact to ATP. Aspartate 137 is a catalytic residue.

The protein belongs to the GHMP kinase family. IspE subfamily.

The catalysed reaction is 4-CDP-2-C-methyl-D-erythritol + ATP = 4-CDP-2-C-methyl-D-erythritol 2-phosphate + ADP + H(+). It functions in the pathway isoprenoid biosynthesis; isopentenyl diphosphate biosynthesis via DXP pathway; isopentenyl diphosphate from 1-deoxy-D-xylulose 5-phosphate: step 3/6. In terms of biological role, catalyzes the phosphorylation of the position 2 hydroxy group of 4-diphosphocytidyl-2C-methyl-D-erythritol. The polypeptide is 4-diphosphocytidyl-2-C-methyl-D-erythritol kinase (Limosilactobacillus fermentum (strain NBRC 3956 / LMG 18251) (Lactobacillus fermentum)).